The following is a 394-amino-acid chain: Elongation factor Tu (394 aa).

In terms of domain architecture, tr-type G spans 10–204 (KPHINIGTIG…AVDDNIPTPE (195 aa)). The segment at 19 to 26 (GHVDHGKT) is G1. 19–26 (GHVDHGKT) is a GTP binding site. Position 26 (Thr-26) interacts with Mg(2+). The G2 stretch occupies residues 60–64 (GITIN). Residues 81-84 (DCPG) are G3. Residues 81–85 (DCPGH) and 136–139 (NKID) contribute to the GTP site. Residues 136 to 139 (NKID) are G4. The interval 174–176 (SAL) is G5.

This sequence belongs to the TRAFAC class translation factor GTPase superfamily. Classic translation factor GTPase family. EF-Tu/EF-1A subfamily. Monomer.

The protein localises to the cytoplasm. The catalysed reaction is GTP + H2O = GDP + phosphate + H(+). GTP hydrolase that promotes the GTP-dependent binding of aminoacyl-tRNA to the A-site of ribosomes during protein biosynthesis. The polypeptide is Elongation factor Tu (Chlamydia trachomatis serovar L2 (strain ATCC VR-902B / DSM 19102 / 434/Bu)).